The sequence spans 496 residues: Probable cytosol aminopeptidase (496 aa).

Residues Lys-266 and Asp-271 each contribute to the Mn(2+) site. Residue Lys-278 is part of the active site. Mn(2+) is bound by residues Asp-289, Asp-348, and Glu-350. The active site involves Arg-352.

The protein belongs to the peptidase M17 family. Requires Mn(2+) as cofactor.

Its subcellular location is the cytoplasm. The catalysed reaction is Release of an N-terminal amino acid, Xaa-|-Yaa-, in which Xaa is preferably Leu, but may be other amino acids including Pro although not Arg or Lys, and Yaa may be Pro. Amino acid amides and methyl esters are also readily hydrolyzed, but rates on arylamides are exceedingly low.. It catalyses the reaction Release of an N-terminal amino acid, preferentially leucine, but not glutamic or aspartic acids.. Functionally, presumably involved in the processing and regular turnover of intracellular proteins. Catalyzes the removal of unsubstituted N-terminal amino acids from various peptides. This Pseudomonas syringae pv. tomato (strain ATCC BAA-871 / DC3000) protein is Probable cytosol aminopeptidase.